Consider the following 73-residue polypeptide: Putative antitoxin VapB16 (73 aa).

Belongs to the UPF0330 family.

Possibly the antitoxin component of a type II toxin-antitoxin (TA) system. Its cognate toxin is VapC16 (Potential). The protein is Putative antitoxin VapB16 (vapB16) of Archaeoglobus fulgidus (strain ATCC 49558 / DSM 4304 / JCM 9628 / NBRC 100126 / VC-16).